Here is a 661-residue protein sequence, read N- to C-terminus: B3 domain-containing protein Os12g0591400 (661 aa).

4 DNA-binding regions (TF-B3) span residues 2–95 (GDQK…FNPS), 197–290 (KTRC…FNPS), 437–535 (LYIT…FKES), and 562–658 (TNLT…IRKG).

The protein localises to the nucleus. The chain is B3 domain-containing protein Os12g0591400 from Oryza sativa subsp. japonica (Rice).